We begin with the raw amino-acid sequence, 93 residues long: Defensin 5 (93 aa).

An N-terminal signal peptide occupies residues 1-19; sequence MKKLVLLSALVLLALQVEA. The propeptide occupies 20–58; it reads EPTPKTDEGTKTDEQPGKEDQVVSVSIEGQGDPAFQDAV. 3 cysteine pairs are disulfide-bonded: Cys-64/Cys-92, Cys-66/Cys-81, and Cys-71/Cys-91.

It belongs to the alpha-defensin family. In terms of tissue distribution, small intestine. Not present in heart, liver, spleen, kidney, large intestine and colon.

It is found in the secreted. Probably contributes to the antimicrobial barrier function of the small intestine. The sequence is that of Defensin 5 from Rattus norvegicus (Rat).